Reading from the N-terminus, the 310-residue chain is Aspartate carbamoyltransferase catalytic subunit (310 aa).

Residues Arg59 and Thr60 each contribute to the carbamoyl phosphate site. Position 87 (Lys87) interacts with L-aspartate. The carbamoyl phosphate site is built by Arg109, His139, and Gln142. Residues Arg172 and Arg224 each coordinate L-aspartate. Carbamoyl phosphate-binding residues include Ala265 and Pro266.

The protein belongs to the aspartate/ornithine carbamoyltransferase superfamily. ATCase family. As to quaternary structure, heterododecamer (2C3:3R2) of six catalytic PyrB chains organized as two trimers (C3), and six regulatory PyrI chains organized as three dimers (R2).

The catalysed reaction is carbamoyl phosphate + L-aspartate = N-carbamoyl-L-aspartate + phosphate + H(+). It functions in the pathway pyrimidine metabolism; UMP biosynthesis via de novo pathway; (S)-dihydroorotate from bicarbonate: step 2/3. In terms of biological role, catalyzes the condensation of carbamoyl phosphate and aspartate to form carbamoyl aspartate and inorganic phosphate, the committed step in the de novo pyrimidine nucleotide biosynthesis pathway. The sequence is that of Aspartate carbamoyltransferase catalytic subunit from Lactococcus lactis subsp. cremoris (strain MG1363).